Consider the following 408-residue polypeptide: RNA exonuclease 4 (408 aa).

A disordered region spans residues 27 to 70; that stretch reads TKEKDVSNSKAHNSRSSQSPSSSLRSSSRIQRKSKHSQGVGQYM. The span at 40–55 shows a compositional bias: low complexity; that stretch reads SRSSQSPSSSLRSSSR. In terms of domain architecture, Exonuclease spans 131 to 292; the sequence is QYLAIDCEMV…YRLHKKEWER (162 aa). A compositionally biased stretch (basic and acidic residues) spans 310–322; sequence PEHVLGKRGHDEK. Positions 310 to 408 are disordered; that stretch reads PEHVLGKRGH…GESWWEQPAA (99 aa). Gly residues predominate over residues 343–357; it reads GNGGGRQQFPGGGRK. Positions 372–384 are enriched in basic and acidic residues; sequence QRVDENGRGDGTS.

The protein belongs to the REXO4 family.

The protein resides in the nucleus. In terms of biological role, exoribonuclease involved in ribosome biosynthesis. Involved in the processing of ITS1, the internal transcribed spacer localized between the 18S and 5.8S rRNAs. The protein is RNA exonuclease 4 (REX4) of Cryptococcus neoformans var. neoformans serotype D (strain B-3501A) (Filobasidiella neoformans).